Here is a 153-residue protein sequence, read N- to C-terminus: Pheromone-binding protein Gp-9 (153 aa).

Positions 1-19 (MKTFVLHIFIFALVAFASA) are cleaved as a signal peptide. 3 disulfides stabilise this stretch: C37–C77, C73–C129, and C118–C138.

It belongs to the PBP/GOBP family. Homodimer.

The protein resides in the secreted. In terms of biological role, colony queen number, a major feature of social organization, is associated with worker genotype for Gp-9. Colonies are headed by either a single reproductive queen (monogyne form) or multiple queens (polygyne form). Differences in worker Gp-9 genotypes between social forms may cause differences in workers' abilities to recognize queens and regulate their numbers. This Solenopsis interrupta (Fire ant) protein is Pheromone-binding protein Gp-9.